The primary structure comprises 580 residues: Purine permease (580 aa).

The next 12 helical transmembrane spans lie at 68 to 88 (PLVL…AGVI), 107 to 127 (SQYL…VQMF), 136 to 156 (YYVG…ITVA), 184 to 204 (YGAL…LSFM), 211 to 231 (ALFP…SLIG), 263 to 283 (LPWG…TIIL), 294 to 314 (SCAV…CGYF), 385 to 405 (LGNG…MSVF), 426 to 446 (CCFF…LVAI), 447 to 467 (PSSV…ISGV), 481 to 501 (FILT…DWFS), and 522 to 542 (LVMA…NLIL).

Belongs to the nucleobase:cation symporter-2 (NCS2) (TC 2.A.40) family.

The protein localises to the membrane. Able to transport with low efficiency all natural purines as well as purine analogs. The sequence is that of Purine permease (uapC) from Emericella nidulans (strain FGSC A4 / ATCC 38163 / CBS 112.46 / NRRL 194 / M139) (Aspergillus nidulans).